The following is a 247-amino-acid chain: 23S rRNA (guanosine-2'-O-)-methyltransferase RlmB (247 aa).

Residues Gly-197, Ile-217, and Leu-226 each contribute to the S-adenosyl-L-methionine site.

It belongs to the class IV-like SAM-binding methyltransferase superfamily. RNA methyltransferase TrmH family. RlmB subfamily.

Its subcellular location is the cytoplasm. The enzyme catalyses guanosine(2251) in 23S rRNA + S-adenosyl-L-methionine = 2'-O-methylguanosine(2251) in 23S rRNA + S-adenosyl-L-homocysteine + H(+). Specifically methylates the ribose of guanosine 2251 in 23S rRNA. The sequence is that of 23S rRNA (guanosine-2'-O-)-methyltransferase RlmB from Vibrio cholerae serotype O1 (strain ATCC 39315 / El Tor Inaba N16961).